A 1125-amino-acid chain; its full sequence is Transient receptor potential cation channel subfamily A member 1 (1125 aa).

Residues 1 to 721 (MKRGLRRILL…KWCAYGFRAH (721 aa)) are Cytoplasmic-facing. ANK repeat units follow at residues 63–94 (ENLC…VLNI), 98–127 (YGNT…NPNL), 131–161 (NMMS…NINL), 165–194 (NGNT…KLCK), 198–227 (WGDY…KNGY), 239–268 (KKAS…HIDM), 272–301 (AKCM…GSSD), 309–338 (NQET…DINS), and 342–371 (EGRS…KVDI). 5 disulfides stabilise this stretch: C193/C666, C463/C666, C609/C622, C622/C666, and C634/C859. At P395 the chain carries 4-hydroxyproline; transient. ANK repeat units lie at residues 413 to 442 (DGCT…SIHS), 446 to 475 (DKKS…DTRL), 482 to 511 (HGMT…LFLS), 514 to 543 (NGWT…KCTD), and 548 to 577 (EGNT…DILL). Residues C415 and C422 each coordinate (E)-cinnamaldehyde. Position 622 (C622) interacts with (E)-cinnamaldehyde. Position 634 is a cysteine sulfenic acid (-SOH); transient; in hyperoxia (C634). (E)-cinnamaldehyde is bound by residues C642, C666, and K712. A helical membrane pass occupies residues 722 to 742 (MMNLGSYCLGLIPMTLLVVKI). Over 743-767 (QPGMAFNSTGIINGTSSTHEERIDT) the chain is Extracellular. Residues N749 and N755 are each glycosylated (N-linked (GlcNAc...) asparagine). The helical transmembrane segment at 768–788 (LNSFPIKICMILVFLSSIFGY) threads the bilayer. Residues 789 to 806 (CKEVIQIFQQKRNYFLDY) are Cytoplasmic-facing. Residues E791, Q794, N808, and E811 each coordinate Ca(2+). Residues 807 to 827 (NNALEWVIYTTSIIFVLPLFL) form a helical membrane-spanning segment. The Extracellular segment spans residues 828-832 (NIPAY). The helical transmembrane segment at 833–853 (MQWQCGAIAIFFYWMNFLLYL) threads the bilayer. Topologically, residues 854–876 (QRFENCGIFIVMLEVIFKTLLRS) are cytoplasmic. C859 carries the cysteine sulfenic acid (-SOH); transient; in hyperoxia modification. A helical membrane pass occupies residues 877-897 (TGVFIFLLLAFGLSFYVLLNF). Residues 898–904 (QDAFSTP) lie on the Extracellular side of the membrane. An intramembrane region (pore-forming) is located at residues 905–925 (LLSLIQTFSMMLGDINYRDAF). At 926–937 (LEPLFRNELAYP) the chain is on the extracellular side. Residues 938–959 (VLTFGQLIAFTMFVPIVLMNLL) form a helical membrane-spanning segment. The Cytoplasmic portion of the chain corresponds to 960-1125 (IGLAVGDIAE…THCSISHPDF (166 aa)). The stretch at 1044–1073 (MEILKQKYRLKDLTSLLEKQHELIKLIIQK) forms a coiled coil. 1048-1054 (KQKYRLK) serves as a coordination point for a 1,2-diacyl-sn-glycero-3-phospho-(1D-myo-inositol).

The protein belongs to the transient receptor (TC 1.A.4) family. In terms of assembly, homotetramer. Interacts with TMEM100. Interacts with EGLN1. Interacts with the scorpion wasabi receptor toxin at the same site that electrophiles but in a non-covalent manner. Post-translationally, TRPA1 activation by electrophiles occurs though covalent modification of specific cysteine residues in the N-terminal cytoplasmic domain. Hydroxylation is required for TRPA1 activity inhibition in normoxia. In hypoxia, the decrease in oxygen concentration diminishes the activity of the hydroxylase EGLN1, thus relieving TRPA1 from inhibition and ultimately leading to channel activation. In terms of processing, oxidation of Cys-634 and Cys-859 in hyperoxia may override the hydroxylase EGLN1-mediated inhibition, causing TRPA1 activation. In terms of tissue distribution, expressed in inner ear (at protein level). Specifically expressed in a subset of nociceptive neurons. Expressed in the same neurons that TRPV1. In contrast, it is not expressed in neurons expressing TRPM8. Expressed in the superior cervical ganglion of vagus nerve. Expressed in the inferior ganglion (nodose ganglion) of vagus nerve. Expressed in dorsal root ganglia neurons.

The protein resides in the cell membrane. The catalysed reaction is Ca(2+)(in) = Ca(2+)(out). The enzyme catalyses Mg(2+)(in) = Mg(2+)(out). It carries out the reaction Na(+)(in) = Na(+)(out). It catalyses the reaction K(+)(in) = K(+)(out). The catalysed reaction is Zn(2+)(in) = Zn(2+)(out). Its activity is regulated as follows. Electrophilic ligands activate the channel by covalent modification of intracellular cysteines. Cys-622 plays a key role in covalent binding of electrophiles. Extracellular Ca(2+) both potentiates and inactivates TRPA1; a rapid potentiation follows by slow desensitization. Activated by increase in intracellular Ca(2+) concentration. Inhibited by the potent blocker of TRPV channels ruthenium red, A-967079. Activated by icilin, sulfhydryl reactive agent MTSEA, N-methyl maleimide (NMM), and PF-4840154. Also activated by hyperoxia. Activated by intracellular Zn(2+). TRPA1 activation may critically depend on the presence of small intracellular compounds such as polyphosphates. Ligand-activated Ca(2+)-permeable, nonselective cation channel. Involved in pain detection and possibly also in cold perception, oxygen concentration perception, cough, itch, and inner ear function. Has a relatively high Ca(2+) selectivity, with a preference for divalent over monovalent cations (Ca(2+) &gt; Ba(2+) &gt; Mg(2+) &gt; NH4(+) &gt; Li(+) &gt; K(+)), the influx of cation into the cytoplasm, leads to membrane depolarization. Has a central role in the pain response to endogenous inflammatory mediators, such as bradykinin and to a diverse array of irritants. Activated by a large variety of structurally unrelated electrophilic and non-electrophilic chemical compounds, such as allylthiocyanate (AITC) from mustard oil or wasabi, cinnamaldehyde, diallyl disulfide (DADS) from garlic, and acrolein, an environmental irritant. Electrophilic ligands activate TRPA1 by interacting with critical N-terminal Cys residues in a covalent manner. Non-electrophile agonists bind at distinct sites in the transmembrane domain to promote channel activation. Also acts as an ionotropic cannabinoid receptor by being activated by delta(9)-tetrahydrocannabinol (THC), the psychoactive component of marijuana. May be a component for the mechanosensitive transduction channel of hair cells in inner ear, thereby participating in the perception of sounds. The polypeptide is Transient receptor potential cation channel subfamily A member 1 (Mus musculus (Mouse)).